The sequence spans 446 residues: MTEQKRKIEKLTGVKGMNDILPQDAGLWEFFEATVKSLLRAYGYQNIRTPIVEHTQLFTRGIGEVTDIVEKEMYSFTDALNGENLTMRPENTAAVVRASIEHNMLYDGPKRLWYIGPMFRHERPQRGRYRQFHQVGVEALGFAGPDADAEIIMMCQRLWDDLGLTGIKLEINSLGLAEERAAHRVELIKYLEQFADVLDEDAKRRLYTNPLRVLDTKNPALQDIAQNAPKLIDFLGDESRAHFEGLQRLLLANNIPFKINPRLVRGLDYYNLTVFEWVTDKLGAQGTVAAGGRYDPLIEQLGGKPTAACGWAMGIERILELLKEEDLAPEQEGVDVYVVHQGETAREQAFIAAERLRDTGLDVIFHCSADGAPASFKSQMKRADASGAAFAVIFGEEEVANGTVGVKALRGAGAEGEKNVQQTVPVESLTEFLINAMVASAEDGDD.

Belongs to the class-II aminoacyl-tRNA synthetase family. In terms of assembly, homodimer.

The protein localises to the cytoplasm. The enzyme catalyses tRNA(His) + L-histidine + ATP = L-histidyl-tRNA(His) + AMP + diphosphate + H(+). This is Histidine--tRNA ligase from Burkholderia cenocepacia (strain ATCC BAA-245 / DSM 16553 / LMG 16656 / NCTC 13227 / J2315 / CF5610) (Burkholderia cepacia (strain J2315)).